We begin with the raw amino-acid sequence, 104 residues long: Pole-localizer protein TmaR (104 aa).

Coiled-coil stretches lie at residues 7-34 (IVNQARRKNKLKRELLDNEKKVRDNRKR) and 76-96 (SAEISKARRDISRRIRELTEE).

It belongs to the pole-localizer TmaR family.

Its subcellular location is the cytoplasm. Pole-localizer protein involved in the regulation of several cellular processes. The polypeptide is Pole-localizer protein TmaR (Vibrio atlanticus (strain LGP32) (Vibrio splendidus (strain Mel32))).